The following is a 703-amino-acid chain: WD repeat-containing protein pop2 (703 aa).

Composition is skewed to polar residues over residues 1-27 (MSLSRCPTDNSSSRINSSVPLINSSSP), 63-73 (ESNSCNGNTSS), and 156-178 (SISSNSDNFPPSPKVDTSNTVSP). 2 disordered regions span residues 1–73 (MSLS…NTSS) and 156–180 (SISSNSDNFPPSPKVDTSNTVSPGS). The interval 1–170 (MSLSRCPTDN…SDNFPPSPKV (170 aa)) is interaction with pop1. One can recognise an F-box domain in the interval 236 to 283 (KDILSNLPFSIVQSILLNLDIHSFLSCRLVSPTWNRILDVHTSYWKHM). WD repeat units follow at residues 389–417 (GHKEGVWAVKIHENTLVSGSIDKTVRVWN), 429–473 (GHIS…RVWK), 505–533 (GHTDSVRTISGYGDILVSGSYDSSIRIWR), 545–575 (GHSLRIYSVLYEPERNICISGSMDKSIRVWD), 587–615 (GHDAFVTLLNVFQNRLISGSADSTIRIWD), and 625–654 (LPSNSGYISSFVSDEHKIISGNDGSVKLWD).

As to quaternary structure, homodimer and heterodimer with pop1. Binds to cul1, pip1 and phosphorylated cdc18.

The protein resides in the cytoplasm. The protein localises to the nucleus. Functionally, involved in maintenance of ploidy through proteasome dependent degradation of CDK inhibitor rum1 and S-phase initiator cdc18. Functions as a recognition factor for rum1 and cdc18, which are subsequently ubiquitinated and targeted to the 26S proteasome for degradation. Together with pop1, required for cig2 instability during G2 and M phase and cig2 degradation in exponentially growing cells. This Schizosaccharomyces pombe (strain 972 / ATCC 24843) (Fission yeast) protein is WD repeat-containing protein pop2 (pop2).